A 117-amino-acid polypeptide reads, in one-letter code: Tyrosine-protein phosphatase 25 (117 aa).

The region spanning 1 to 117 (WLMIIEQKCN…DLIGQSPIVV (117 aa)) is the Tyrosine-protein phosphatase domain. Aspartate 85 lines the substrate pocket.

Belongs to the protein-tyrosine phosphatase family.

The enzyme catalyses O-phospho-L-tyrosyl-[protein] + H2O = L-tyrosyl-[protein] + phosphate. The protein is Tyrosine-protein phosphatase 25 (STY-25) of Styela plicata (Wrinkled sea squirt).